Reading from the N-terminus, the 83-residue chain is Protein FAM240A (83 aa).

This sequence belongs to the FAM240 family.

The polypeptide is Protein FAM240A (Homo sapiens (Human)).